We begin with the raw amino-acid sequence, 794 residues long: LPS-assembly protein LptD (794 aa).

Residues 1–31 (MPSHCSSLLCARFRLSSLAVIVALAASGVRA) form the signal peptide.

This sequence belongs to the LptD family. In terms of assembly, component of the lipopolysaccharide transport and assembly complex. Interacts with LptE and LptA.

It is found in the cell outer membrane. Functionally, together with LptE, is involved in the assembly of lipopolysaccharide (LPS) at the surface of the outer membrane. This chain is LPS-assembly protein LptD, found in Marinobacter nauticus (strain ATCC 700491 / DSM 11845 / VT8) (Marinobacter aquaeolei).